We begin with the raw amino-acid sequence, 255 residues long: Trans-aconitate 2-methyltransferase (255 aa).

The protein belongs to the methyltransferase superfamily. Tam family.

Its subcellular location is the cytoplasm. It catalyses the reaction trans-aconitate + S-adenosyl-L-methionine = (E)-3-(methoxycarbonyl)pent-2-enedioate + S-adenosyl-L-homocysteine. Functionally, catalyzes the S-adenosylmethionine monomethyl esterification of trans-aconitate. This is Trans-aconitate 2-methyltransferase from Mycolicibacterium gilvum (strain PYR-GCK) (Mycobacterium gilvum (strain PYR-GCK)).